The primary structure comprises 298 residues: ATP synthase gamma chain (298 aa).

It belongs to the ATPase gamma chain family. F-type ATPases have 2 components, CF(1) - the catalytic core - and CF(0) - the membrane proton channel. CF(1) has five subunits: alpha(3), beta(3), gamma(1), delta(1), epsilon(1). CF(0) has three main subunits: a, b and c.

It localises to the cell inner membrane. Functionally, produces ATP from ADP in the presence of a proton gradient across the membrane. The gamma chain is believed to be important in regulating ATPase activity and the flow of protons through the CF(0) complex. This Desulfosudis oleivorans (strain DSM 6200 / JCM 39069 / Hxd3) (Desulfococcus oleovorans) protein is ATP synthase gamma chain.